Reading from the N-terminus, the 362-residue chain is Protein RecA (362 aa).

77-84 (GPESSGKT) contributes to the ATP binding site.

This sequence belongs to the RecA family.

It localises to the cytoplasm. In terms of biological role, can catalyze the hydrolysis of ATP in the presence of single-stranded DNA, the ATP-dependent uptake of single-stranded DNA by duplex DNA, and the ATP-dependent hybridization of homologous single-stranded DNAs. It interacts with LexA causing its activation and leading to its autocatalytic cleavage. The chain is Protein RecA from Allorhizobium ampelinum (strain ATCC BAA-846 / DSM 112012 / S4) (Agrobacterium vitis (strain S4)).